An 85-amino-acid chain; its full sequence is Cell division protein ZapA (85 aa).

Residues 59-85 (TAVNVVHDYMKLQEKYEILERQLKEKE) adopt a coiled-coil conformation.

The protein belongs to the ZapA family. Type 2 subfamily. In terms of assembly, homodimer. Interacts with FtsZ.

The protein localises to the cytoplasm. Activator of cell division through the inhibition of FtsZ GTPase activity, therefore promoting FtsZ assembly into bundles of protofilaments necessary for the formation of the division Z ring. It is recruited early at mid-cell but it is not essential for cell division. This is Cell division protein ZapA from Bacillus velezensis (strain DSM 23117 / BGSC 10A6 / LMG 26770 / FZB42) (Bacillus amyloliquefaciens subsp. plantarum).